A 317-amino-acid polypeptide reads, in one-letter code: 4-hydroxy-3-methylbut-2-enyl diphosphate reductase (317 aa).

Position 12 (Cys-12) interacts with [4Fe-4S] cluster. (2E)-4-hydroxy-3-methylbut-2-enyl diphosphate is bound by residues His-41 and His-74. Residues His-41 and His-74 each coordinate dimethylallyl diphosphate. Isopentenyl diphosphate is bound by residues His-41 and His-74. Position 96 (Cys-96) interacts with [4Fe-4S] cluster. His-124 lines the (2E)-4-hydroxy-3-methylbut-2-enyl diphosphate pocket. Position 124 (His-124) interacts with dimethylallyl diphosphate. His-124 lines the isopentenyl diphosphate pocket. The active-site Proton donor is the Glu-126. Thr-168 serves as a coordination point for (2E)-4-hydroxy-3-methylbut-2-enyl diphosphate. Cys-198 is a binding site for [4Fe-4S] cluster. The (2E)-4-hydroxy-3-methylbut-2-enyl diphosphate site is built by Ser-226, Ser-227, Asn-228, and Ser-270. Residues Ser-226, Ser-227, Asn-228, and Ser-270 each contribute to the dimethylallyl diphosphate site. Isopentenyl diphosphate is bound by residues Ser-226, Ser-227, Asn-228, and Ser-270.

Belongs to the IspH family. The cofactor is [4Fe-4S] cluster.

The catalysed reaction is isopentenyl diphosphate + 2 oxidized [2Fe-2S]-[ferredoxin] + H2O = (2E)-4-hydroxy-3-methylbut-2-enyl diphosphate + 2 reduced [2Fe-2S]-[ferredoxin] + 2 H(+). The enzyme catalyses dimethylallyl diphosphate + 2 oxidized [2Fe-2S]-[ferredoxin] + H2O = (2E)-4-hydroxy-3-methylbut-2-enyl diphosphate + 2 reduced [2Fe-2S]-[ferredoxin] + 2 H(+). Its pathway is isoprenoid biosynthesis; dimethylallyl diphosphate biosynthesis; dimethylallyl diphosphate from (2E)-4-hydroxy-3-methylbutenyl diphosphate: step 1/1. The protein operates within isoprenoid biosynthesis; isopentenyl diphosphate biosynthesis via DXP pathway; isopentenyl diphosphate from 1-deoxy-D-xylulose 5-phosphate: step 6/6. Its function is as follows. Catalyzes the conversion of 1-hydroxy-2-methyl-2-(E)-butenyl 4-diphosphate (HMBPP) into a mixture of isopentenyl diphosphate (IPP) and dimethylallyl diphosphate (DMAPP). Acts in the terminal step of the DOXP/MEP pathway for isoprenoid precursor biosynthesis. The chain is 4-hydroxy-3-methylbut-2-enyl diphosphate reductase from Hahella chejuensis (strain KCTC 2396).